The primary structure comprises 221 residues: Cutinase 3 (221 aa).

The first 17 residues, 1-17 (MRFHTILLAALASLVIA), serve as a signal peptide directing secretion. 2 disulfides stabilise this stretch: C44–C122 and C70–C84. Catalysis depends on S133, which acts as the Nucleophile. An intrachain disulfide couples C184 to C191. The active site involves D188. H201 serves as the catalytic Proton donor/acceptor.

Belongs to the cutinase family.

It localises to the secreted. It carries out the reaction cutin + H2O = cutin monomers.. Its function is as follows. Catalyzes the hydrolysis of complex carboxylic polyesters found in the cell wall of plants. Degrades cutin, a macromolecule that forms the structure of the plant cuticle. Also degrades suberin, a specialized macromolecule found in the cell wall of various plant tissues. In Emericella nidulans (strain FGSC A4 / ATCC 38163 / CBS 112.46 / NRRL 194 / M139) (Aspergillus nidulans), this protein is Cutinase 3.